Consider the following 345-residue polypeptide: D-fructose 1,6-bisphosphatase class 2/sedoheptulose 1,7-bisphosphatase (345 aa).

Mn(2+)-binding residues include D33, E57, D97, and E100. Substrate contacts are provided by residues 100–102 (EGT), Y131, 176–178 (RPR), and 198–200 (DGD). Position 225 (E225) interacts with Mn(2+).

It belongs to the FBPase class 2 family. In terms of assembly, homotetramer. Requires Mn(2+) as cofactor.

The enzyme catalyses beta-D-fructose 1,6-bisphosphate + H2O = beta-D-fructose 6-phosphate + phosphate. It catalyses the reaction D-sedoheptulose 1,7-bisphosphate + H2O = D-sedoheptulose 7-phosphate + phosphate. The protein operates within carbohydrate biosynthesis; Calvin cycle. Its function is as follows. Catalyzes the hydrolysis of fructose 1,6-bisphosphate (Fru 1,6-P2) and sedoheptulose 1,7-bisphosphate (Sed 1,7-P2) to fructose 6-phosphate and sedoheptulose 7-phosphate, respectively. The sequence is that of D-fructose 1,6-bisphosphatase class 2/sedoheptulose 1,7-bisphosphatase from Trichodesmium erythraeum (strain IMS101).